Reading from the N-terminus, the 948-residue chain is Protein translocase subunit SecA (948 aa).

Residues Gln-91, 109-113 (GEGKT), and Asp-509 each bind ATP.

This sequence belongs to the SecA family. As to quaternary structure, monomer and homodimer. Part of the essential Sec protein translocation apparatus which comprises SecA, SecYEG and auxiliary proteins SecDF. Other proteins may also be involved.

The protein resides in the cell inner membrane. Its subcellular location is the cellular thylakoid membrane. It localises to the cytoplasm. It catalyses the reaction ATP + H2O + cellular proteinSide 1 = ADP + phosphate + cellular proteinSide 2.. In terms of biological role, part of the Sec protein translocase complex. Interacts with the SecYEG preprotein conducting channel. Has a central role in coupling the hydrolysis of ATP to the transfer of proteins into and across the cell membrane, serving as an ATP-driven molecular motor driving the stepwise translocation of polypeptide chains across the membrane. Functionally, probably participates in protein translocation into and across both the cytoplasmic and thylakoid membranes in cyanobacterial cells. The protein is Protein translocase subunit SecA of Synechococcus elongatus (strain ATCC 33912 / PCC 7942 / FACHB-805) (Anacystis nidulans R2).